Reading from the N-terminus, the 596-residue chain is uncharacterized protein (596 aa).

Positions 1-20 (MRYKPLLLALMLVFSTPAVA) are cleaved as a signal peptide. Composition is skewed to basic and acidic residues over residues 25-90 (AHNR…KEAT) and 161-184 (VRSDKNGKAVKQDKKYREEKNAKT). The disordered stretch occupies residues 25-184 (AHNRSAEVKK…KYREEKNAKT (160 aa)). Coiled-coil stretches lie at residues 177-281 (REEK…RFVS) and 318-454 (NREV…TAED).

Belongs to the peptidase M23B family.

This is an uncharacterized protein from Neisseria meningitidis serogroup B (strain ATCC BAA-335 / MC58).